A 473-amino-acid polypeptide reads, in one-letter code: MSPQTETKASVGFKAGVKDYKLNYYTPEYETKDTDILAAFRVTPQPGVPPEEAGASVAAESSTGTWTTVWTDGLTSLDRYKGRCYHIEPVAGEENQYIAYVAYPLDLFEEGSVTNMFTSIVGNVFGFKALRALRLEDLRIPNAYIKTFQGPPHGIQVERDKLNKYGRPLLGCTIKPKLGLSAKNYGRAVYECLRGGLDFTKDDENVNSQPFMRWRDRFLFCAEAIFKSQAETGEIKGHYLNATAGTCEEMMKRAVFARELGVPIVMHDYLTGGFTANTSLAHYCRDNGLLLHIHRAMHAVIDRQKNHGMHFRVLAKALRLSGGDHVHSGTVVGKLEGERDITLGFVDLLRDDFVEKDRSRGIYFTQDWVSLPGVLPVASGGIHVWHMPALTEIFGDDSVLQFGGGTLGHPWGNAPGAVANRVALEACVKARNEGRDLAREGNEIIREASKWSPELAAACEVWKEIKFEFPAMD.

Positions 1-2 (MS) are excised as a propeptide. The residue at position 3 (Pro3) is an N-acetylproline. An N6,N6,N6-trimethyllysine modification is found at Lys14. Residues Asn123 and Thr173 each contribute to the substrate site. Catalysis depends on Lys175, which acts as the Proton acceptor. Residue Lys177 participates in substrate binding. Lys201, Asp203, and Glu204 together coordinate Mg(2+). Lys201 is modified (N6-carboxylysine). His294 acts as the Proton acceptor in catalysis. Substrate-binding residues include Arg295, His327, and Ser379.

Belongs to the RuBisCO large chain family. Type I subfamily. Heterohexadecamer of 8 large chains and 8 small chains; disulfide-linked. The disulfide link is formed within the large subunit homodimers. Mg(2+) is required as a cofactor. The disulfide bond which can form in the large chain dimeric partners within the hexadecamer appears to be associated with oxidative stress and protein turnover.

The protein resides in the plastid. It is found in the chloroplast. It carries out the reaction 2 (2R)-3-phosphoglycerate + 2 H(+) = D-ribulose 1,5-bisphosphate + CO2 + H2O. The catalysed reaction is D-ribulose 1,5-bisphosphate + O2 = 2-phosphoglycolate + (2R)-3-phosphoglycerate + 2 H(+). RuBisCO catalyzes two reactions: the carboxylation of D-ribulose 1,5-bisphosphate, the primary event in carbon dioxide fixation, as well as the oxidative fragmentation of the pentose substrate in the photorespiration process. Both reactions occur simultaneously and in competition at the same active site. The sequence is that of Ribulose bisphosphate carboxylase large chain from Vigna unguiculata (Cowpea).